A 179-amino-acid chain; its full sequence is Adenine phosphoribosyltransferase (179 aa).

This sequence belongs to the purine/pyrimidine phosphoribosyltransferase family. In terms of assembly, homodimer.

It is found in the cytoplasm. The enzyme catalyses AMP + diphosphate = 5-phospho-alpha-D-ribose 1-diphosphate + adenine. It functions in the pathway purine metabolism; AMP biosynthesis via salvage pathway; AMP from adenine: step 1/1. Functionally, catalyzes a salvage reaction resulting in the formation of AMP, that is energically less costly than de novo synthesis. This chain is Adenine phosphoribosyltransferase, found in Jannaschia sp. (strain CCS1).